Consider the following 1241-residue polypeptide: Anion exchange protein 2 (1241 aa).

A disordered region spans residues 1-240 (MSSAPRRPAK…RSYNLQERRR (240 aa)). The Cytoplasmic portion of the chain corresponds to 1 to 707 (MSSAPRRPAK…SDFRDALDPQ (707 aa)). 2 stretches are compositionally biased toward basic and acidic residues: residues 37–49 (ELHR…RFEE) and 58–75 (GGEE…EYHR). Composition is skewed to basic residues over residues 76–85 (QSSHHIHHPL) and 94–110 (RRRK…RRRP). Residues Ser113, Ser132, Ser144, Ser170, Ser172, and Ser173 each carry the phosphoserine modification. The segment covering 120–133 (TIEEGEEDEDEASE) has biased composition (acidic residues). Residues 141-155 (TQPSPVSTPSSVQFF) are compositionally biased toward low complexity. Thr183 is subject to Phosphothreonine. The span at 189 to 209 (GAQAGTQVEEAEAEAVAVASG) shows a compositional bias: low complexity. The span at 210 to 219 (TAGGDDGGAS) shows a compositional bias: gly residues. Ser243 carries the post-translational modification Phosphoserine. Residue Thr257 is modified to Phosphothreonine. Lys274 is subject to N6-methyllysine. The tract at residues 288–320 (LVRKNAKGSTQSGREGREPGPTPRARPRAPHKP) is disordered. Residue Ser443 is modified to Phosphoserine. A disordered region spans residues 449-471 (SLLGHHHGQGAESDPHVTEPLMG). Helical transmembrane passes span 708–731 (CLAA…GLLG), 737–774 (LIGV…LLVF), 784–816 (SNHL…SFLV), and 826–847 (IFAF…VKIF). The segment at 708–1241 (CLAAVIFIYF…DEYNEMPMPV (534 aa)) is membrane (anion exchange). Residues 848-900 (QEHPLHGCSASNSSEVDGGENMTWAGARPTLGPGNRSLAGQSGQGKPRGQPNT) are Extracellular-facing. Asn859, Asn868, and Asn882 each carry an N-linked (GlcNAc...) asparagine glycan. The helical transmembrane segment at 901 to 918 (ALLSLVLMAGTFFIAFFL) threads the bilayer. Topologically, residues 919 to 933 (RKFKNSRFFPGRIRR) are cytoplasmic. 5 helical membrane-spanning segments follow: residues 934-954 (VIGD…DYSI), 988-1010 (PFPV…LIFM), 1036-1059 (LLLI…AATV), 1091-1136 (VTGL…IQFY), and 1163-1199 (MHLF…TVPL). Cys1173 carries the S-palmitoyl cysteine lipid modification.

This sequence belongs to the anion exchanger (TC 2.A.31) family. In terms of tissue distribution, expressed in the liver, stomach, kidney, prostate, thyroid and rectum. As to expression, expressed in the liver and kidney.

Its subcellular location is the apical cell membrane. The protein localises to the basolateral cell membrane. It catalyses the reaction hydrogencarbonate(in) + chloride(out) = hydrogencarbonate(out) + chloride(in). Its function is as follows. Sodium-independent anion exchanger which mediates the electroneutral exchange of chloride for bicarbonate ions across the cell membrane. Plays an important role in osteoclast differentiation and function. Regulates bone resorption and calpain-dependent actin cytoskeleton organization in osteoclasts via anion exchange-dependent control of pH. Essential for intracellular pH regulation in CD8(+) T-cells upon CD3 stimulation, modulating CD8(+) T-cell responses. This is Anion exchange protein 2 (SLC4A2) from Homo sapiens (Human).